The chain runs to 254 residues: Phosphoribosylaminoimidazole-succinocarboxamide synthase (254 aa).

This sequence belongs to the SAICAR synthetase family.

It carries out the reaction 5-amino-1-(5-phospho-D-ribosyl)imidazole-4-carboxylate + L-aspartate + ATP = (2S)-2-[5-amino-1-(5-phospho-beta-D-ribosyl)imidazole-4-carboxamido]succinate + ADP + phosphate + 2 H(+). It participates in purine metabolism; IMP biosynthesis via de novo pathway; 5-amino-1-(5-phospho-D-ribosyl)imidazole-4-carboxamide from 5-amino-1-(5-phospho-D-ribosyl)imidazole-4-carboxylate: step 1/2. The polypeptide is Phosphoribosylaminoimidazole-succinocarboxamide synthase (Bartonella tribocorum (strain CIP 105476 / IBS 506)).